A 272-amino-acid chain; its full sequence is 3-deoxy-manno-octulosonate cytidylyltransferase (272 aa).

The protein belongs to the KdsB family.

It localises to the cytoplasm. It catalyses the reaction 3-deoxy-alpha-D-manno-oct-2-ulosonate + CTP = CMP-3-deoxy-beta-D-manno-octulosonate + diphosphate. Its pathway is nucleotide-sugar biosynthesis; CMP-3-deoxy-D-manno-octulosonate biosynthesis; CMP-3-deoxy-D-manno-octulosonate from 3-deoxy-D-manno-octulosonate and CTP: step 1/1. It functions in the pathway bacterial outer membrane biogenesis; lipopolysaccharide biosynthesis. Activates KDO (a required 8-carbon sugar) for incorporation into bacterial lipopolysaccharide in Gram-negative bacteria. The polypeptide is 3-deoxy-manno-octulosonate cytidylyltransferase (Verminephrobacter eiseniae (strain EF01-2)).